A 342-amino-acid polypeptide reads, in one-letter code: Anthranilate phosphoribosyltransferase (342 aa).

5-phospho-alpha-D-ribose 1-diphosphate contacts are provided by residues glycine 79, 82-83 (GD), threonine 87, 89-92 (NVST), 107-115 (KHGNRSVSS), and serine 119. An anthranilate-binding site is contributed by glycine 79. Serine 91 serves as a coordination point for Mg(2+). Asparagine 110 provides a ligand contact to anthranilate. Arginine 165 provides a ligand contact to anthranilate. Mg(2+) is bound by residues aspartate 223 and glutamate 224.

Belongs to the anthranilate phosphoribosyltransferase family. As to quaternary structure, homodimer. Mg(2+) serves as cofactor.

The enzyme catalyses N-(5-phospho-beta-D-ribosyl)anthranilate + diphosphate = 5-phospho-alpha-D-ribose 1-diphosphate + anthranilate. It participates in amino-acid biosynthesis; L-tryptophan biosynthesis; L-tryptophan from chorismate: step 2/5. In terms of biological role, catalyzes the transfer of the phosphoribosyl group of 5-phosphorylribose-1-pyrophosphate (PRPP) to anthranilate to yield N-(5'-phosphoribosyl)-anthranilate (PRA). This is Anthranilate phosphoribosyltransferase from Aeromonas hydrophila subsp. hydrophila (strain ATCC 7966 / DSM 30187 / BCRC 13018 / CCUG 14551 / JCM 1027 / KCTC 2358 / NCIMB 9240 / NCTC 8049).